We begin with the raw amino-acid sequence, 473 residues long: Glutamyl-tRNA reductase (473 aa).

Residues 49–52, serine 109, 114–116, and glutamine 120 each bind substrate; these read TCNR and EQQ. Cysteine 50 acts as the Nucleophile in catalysis. An NADP(+)-binding site is contributed by 189 to 194; it reads GAGSMG. A disordered region spans residues 445-473; that stretch reads SGLDAGSGPQGADGPSAGPTPSAPNPSAE.

This sequence belongs to the glutamyl-tRNA reductase family. As to quaternary structure, homodimer.

The enzyme catalyses (S)-4-amino-5-oxopentanoate + tRNA(Glu) + NADP(+) = L-glutamyl-tRNA(Glu) + NADPH + H(+). Its pathway is porphyrin-containing compound metabolism; protoporphyrin-IX biosynthesis; 5-aminolevulinate from L-glutamyl-tRNA(Glu): step 1/2. In terms of biological role, catalyzes the NADPH-dependent reduction of glutamyl-tRNA(Glu) to glutamate 1-semialdehyde (GSA). The chain is Glutamyl-tRNA reductase from Mycobacterium ulcerans (strain Agy99).